Here is a 229-residue protein sequence, read N- to C-terminus: Uracil-DNA glycosylase (229 aa).

The active-site Proton acceptor is the D70.

This sequence belongs to the uracil-DNA glycosylase (UDG) superfamily. UNG family.

Its subcellular location is the cytoplasm. The enzyme catalyses Hydrolyzes single-stranded DNA or mismatched double-stranded DNA and polynucleotides, releasing free uracil.. Functionally, excises uracil residues from the DNA which can arise as a result of misincorporation of dUMP residues by DNA polymerase or due to deamination of cytosine. This is Uracil-DNA glycosylase from Chlamydia trachomatis serovar L2b (strain UCH-1/proctitis).